A 222-amino-acid chain; its full sequence is Methylthioribulose-1-phosphate dehydratase (222 aa).

2 residues coordinate Zn(2+): His-94 and His-96.

It belongs to the aldolase class II family. MtnB subfamily. Requires Zn(2+) as cofactor.

The enzyme catalyses 5-(methylsulfanyl)-D-ribulose 1-phosphate = 5-methylsulfanyl-2,3-dioxopentyl phosphate + H2O. It functions in the pathway amino-acid biosynthesis; L-methionine biosynthesis via salvage pathway; L-methionine from S-methyl-5-thio-alpha-D-ribose 1-phosphate: step 2/6. In terms of biological role, catalyzes the dehydration of methylthioribulose-1-phosphate (MTRu-1-P) into 2,3-diketo-5-methylthiopentyl-1-phosphate (DK-MTP-1-P). In Yersinia pseudotuberculosis serotype O:1b (strain IP 31758), this protein is Methylthioribulose-1-phosphate dehydratase.